Consider the following 558-residue polypeptide: Glucose-6-phosphate isomerase (558 aa).

At Ala-2 the chain carries N-acetylalanine. Residue Lys-12 is modified to N6-acetyllysine. Phosphoserine is present on residues Ser-86 and Ser-107. Residue Lys-142 is modified to N6-acetyllysine. Residue 159 to 160 coordinates D-glucose 6-phosphate; it reads GS. Ser-185 carries the post-translational modification Phosphoserine; by CK2. 210–215 is a D-glucose 6-phosphate binding site; the sequence is SKTFTT. Thr-250 carries the phosphothreonine modification. Gln-354, Glu-358, and His-389 together coordinate D-glucose 6-phosphate. Residue Glu-358 is the Proton donor of the active site. His-389 is a catalytic residue. Lys-454 carries the post-translational modification N6-acetyllysine; alternate. At Lys-454 the chain carries N6-malonyllysine; alternate. An N6-succinyllysine; alternate modification is found at Lys-454. Ser-455 carries the post-translational modification Phosphoserine. A D-glucose 6-phosphate-binding site is contributed by Lys-519. Residue Lys-519 is part of the active site.

It belongs to the GPI family. Homodimer; in the catalytically active form. Monomer in the secreted form. In terms of processing, phosphorylation at Ser-185 by CK2 has been shown to decrease enzymatic activity and may contribute to secretion by a non-classical secretory pathway. ISGylated.

The protein resides in the cytoplasm. Its subcellular location is the secreted. It catalyses the reaction alpha-D-glucose 6-phosphate = beta-D-fructose 6-phosphate. It functions in the pathway carbohydrate degradation; glycolysis; D-glyceraldehyde 3-phosphate and glycerone phosphate from D-glucose: step 2/4. In the cytoplasm, catalyzes the conversion of glucose-6-phosphate to fructose-6-phosphate, the second step in glycolysis, and the reverse reaction during gluconeogenesis. Besides it's role as a glycolytic enzyme, also acts as a secreted cytokine: acts as an angiogenic factor (AMF) that stimulates endothelial cell motility. Acts as a neurotrophic factor, neuroleukin, for spinal and sensory neurons. It is secreted by lectin-stimulated T-cells and induces immunoglobulin secretion. The protein is Glucose-6-phosphate isomerase of Rattus norvegicus (Rat).